The primary structure comprises 89 residues: Small ribosomal subunit protein uS15 (89 aa).

The protein belongs to the universal ribosomal protein uS15 family. As to quaternary structure, part of the 30S ribosomal subunit. Forms a bridge to the 50S subunit in the 70S ribosome, contacting the 23S rRNA.

One of the primary rRNA binding proteins, it binds directly to 16S rRNA where it helps nucleate assembly of the platform of the 30S subunit by binding and bridging several RNA helices of the 16S rRNA. Functionally, forms an intersubunit bridge (bridge B4) with the 23S rRNA of the 50S subunit in the ribosome. In Prochlorococcus marinus (strain MIT 9312), this protein is Small ribosomal subunit protein uS15.